The primary structure comprises 258 residues: Ribosomal RNA small subunit methyltransferase A (258 aa).

S-adenosyl-L-methionine-binding residues include H9, L11, G36, E57, D83, and N102.

Belongs to the class I-like SAM-binding methyltransferase superfamily. rRNA adenine N(6)-methyltransferase family. RsmA subfamily.

The protein resides in the cytoplasm. The catalysed reaction is adenosine(1518)/adenosine(1519) in 16S rRNA + 4 S-adenosyl-L-methionine = N(6)-dimethyladenosine(1518)/N(6)-dimethyladenosine(1519) in 16S rRNA + 4 S-adenosyl-L-homocysteine + 4 H(+). In terms of biological role, specifically dimethylates two adjacent adenosines (A1518 and A1519) in the loop of a conserved hairpin near the 3'-end of 16S rRNA in the 30S particle. May play a critical role in biogenesis of 30S subunits. The polypeptide is Ribosomal RNA small subunit methyltransferase A (Caulobacter vibrioides (strain ATCC 19089 / CIP 103742 / CB 15) (Caulobacter crescentus)).